The following is a 275-amino-acid chain: NAD kinase (275 aa).

Residue Asp68 is the Proton acceptor of the active site. Residues 68–69 (DG), Arg73, 136–137 (NE), Lys147, Arg164, Asp166, 177–182 (TAYAMS), Ala201, and Gln236 contribute to the NAD(+) site.

Belongs to the NAD kinase family. It depends on a divalent metal cation as a cofactor.

The protein localises to the cytoplasm. The catalysed reaction is NAD(+) + ATP = ADP + NADP(+) + H(+). Involved in the regulation of the intracellular balance of NAD and NADP, and is a key enzyme in the biosynthesis of NADP. Catalyzes specifically the phosphorylation on 2'-hydroxyl of the adenosine moiety of NAD to yield NADP. This Methanosarcina barkeri (strain Fusaro / DSM 804) protein is NAD kinase.